Reading from the N-terminus, the 415-residue chain is Corticotropin-releasing factor receptor 1 (415 aa).

A signal peptide spans 1–23; the sequence is MGRRPQLRLVKALLLLGLNSISA. The Extracellular segment spans residues 24 to 111; the sequence is SLQDQHCESL…CQEILSEGEK (88 aa). Intrachain disulfides connect Cys-30–Cys-54, Cys-44–Cys-87, and Cys-68–Cys-102. Asn-38, Asn-45, Asn-51, Asn-78, Asn-90, and Asn-98 each carry an N-linked (GlcNAc...) asparagine glycan. The interval 99–108 is important for peptide agonist binding; the sequence is HSECQEILSE. A helical transmembrane segment spans residues 112–142; the sequence is SKAHYHIAVIINYLGHCISLAALLVAFVLFL. The Cytoplasmic portion of the chain corresponds to 143–149; the sequence is RLRSIRC. Residues 150-174 traverse the membrane as a helical segment; sequence VRNIIHWNLISAFILRNATWFVVQL. The Extracellular segment spans residues 175-189; that stretch reads TMSPEVHQSNVGWCR. A disulfide bridge links Cys-188 with Cys-258. The chain crosses the membrane as a helical span at residues 190 to 218; sequence LVTAAYNYFHVTNFFWMFGEGCYLHTAVV. The Cytoplasmic segment spans residues 219 to 225; that stretch reads LTYSTDR. Residues 226-253 form a helical membrane-spanning segment; the sequence is LRKWMFICIGWGVPFPIIVAWAIGKLYY. The Extracellular segment spans residues 254 to 269; that stretch reads DNEKCWFGKRPGVYTD. A helical transmembrane segment spans residues 270 to 295; the sequence is YIYQGPMILVLLINFIFLFNIVRILM. The interval 280–290 is important for antagonist binding; that stretch reads LLINFIFLFNI. Over 296–306 the chain is Cytoplasmic; it reads TKLRASTTSET. At Ser-301 the chain carries Phosphoserine; by PKA. Residues 307 to 331 form a helical membrane-spanning segment; that stretch reads IQYRKAVKATLVLLPLLGITYMLFF. Topologically, residues 332-338 are extracellular; the sequence is VNPGEDE. A helical transmembrane segment spans residues 339 to 368; sequence VSRVVFIYFNSFLESFQGFFVSVFYCFLNS. The Cytoplasmic portion of the chain corresponds to 369–415; that stretch reads EVRSAIRKRWHRWQDKHSIRARVARAMSIPTSPTRVSFHSIKQSTAV.

This sequence belongs to the G-protein coupled receptor 2 family. In terms of assembly, heterodimer; heterodimerizes with GPER1. Interacts (via N-terminal extracellular domain) with CRH and UCN. Interacts with DLG1; this inhibits endocytosis of CRHR1 after agonist binding. In terms of processing, C-terminal Ser or Thr residues may be phosphorylated. Phosphorylation at Ser-301 by PKA prevents maximal coupling to Gq-protein, and thereby negatively regulates downstream signaling.

The protein localises to the cell membrane. It localises to the endosome. In terms of biological role, G-protein coupled receptor for CRH (corticotropin-releasing factor) and UCN (urocortin). Has high affinity for CRH and UCN. Ligand binding causes a conformation change that triggers signaling via guanine nucleotide-binding proteins (G proteins) and down-stream effectors, such as adenylate cyclase. Promotes the activation of adenylate cyclase, leading to increased intracellular cAMP levels. Inhibits the activity of the calcium channel CACNA1H. Required for normal embryonic development of the adrenal gland and for normal hormonal responses to stress. Plays a role in the response to anxiogenic stimuli. The polypeptide is Corticotropin-releasing factor receptor 1 (CRHR1) (Ovis aries (Sheep)).